Reading from the N-terminus, the 506-residue chain is ATP synthase subunit alpha (506 aa).

Position 169-176 (169-176) interacts with ATP; sequence GDRGTGKT.

Belongs to the ATPase alpha/beta chains family. As to quaternary structure, F-type ATPases have 2 components, CF(1) - the catalytic core - and CF(0) - the membrane proton channel. CF(1) has five subunits: alpha(3), beta(3), gamma(1), delta(1), epsilon(1). CF(0) has three main subunits: a(1), b(2) and c(9-12). The alpha and beta chains form an alternating ring which encloses part of the gamma chain. CF(1) is attached to CF(0) by a central stalk formed by the gamma and epsilon chains, while a peripheral stalk is formed by the delta and b chains.

The protein localises to the cell membrane. It carries out the reaction ATP + H2O + 4 H(+)(in) = ADP + phosphate + 5 H(+)(out). Its function is as follows. Produces ATP from ADP in the presence of a proton gradient across the membrane. The alpha chain is a regulatory subunit. This Symbiobacterium thermophilum (strain DSM 24528 / JCM 14929 / IAM 14863 / T) protein is ATP synthase subunit alpha.